A 367-amino-acid chain; its full sequence is MISFETKTKIEELEKKYKDVLSVVNEDEINKELEEVEKKLTDPSVWDDQKKAREYTQKLKRLKNISEDLKRVRSLFEDLEVAIELSDEDQEMAQHVEEIVQELEGAVKKLELEIILNGKYDPNNAYLSVHPGAGGTESQDWAQMLLRMYMRWAERKGFDVEIVEFQPGEEAGIKDATILIKGEYAYGYLKHESGVHRLVRISPFDAARRRHTSFASVNVIPEIDDDVDIEIRPEDLKIETFRASGHGGQYVNKTESAVRITHLPTGIVVSCQNERSQHQNKQTALKILKAKLYQLEMEKKRREIQEIQGELKDISWGNQIRSYIFHPYTMVKDHRTGVETANVDAVMDGDIDMFIEAELVYFARRSS.

The residue at position 249 (glutamine 249) is an N5-methylglutamine.

The protein belongs to the prokaryotic/mitochondrial release factor family. In terms of processing, methylated by PrmC. Methylation increases the termination efficiency of RF2.

The protein resides in the cytoplasm. Its function is as follows. Peptide chain release factor 2 directs the termination of translation in response to the peptide chain termination codons UGA and UAA. The protein is Peptide chain release factor 2 of Thermotoga sp. (strain RQ2).